The chain runs to 194 residues: Phosphoheptose isomerase (194 aa).

In terms of domain architecture, SIS spans Ile37–Ala194. Asn52 to Gly54 lines the substrate pocket. Zn(2+) contacts are provided by His61 and Glu65. Substrate contacts are provided by residues Glu65, Asn93 to Asp94, Ser119 to Ser121, Ser124, and Gln172. 2 residues coordinate Zn(2+): Gln172 and His180.

The protein belongs to the SIS family. GmhA subfamily. Homotetramer. Requires Zn(2+) as cofactor.

The protein localises to the cytoplasm. It catalyses the reaction 2 D-sedoheptulose 7-phosphate = D-glycero-alpha-D-manno-heptose 7-phosphate + D-glycero-beta-D-manno-heptose 7-phosphate. Its pathway is carbohydrate biosynthesis; D-glycero-D-manno-heptose 7-phosphate biosynthesis; D-glycero-alpha-D-manno-heptose 7-phosphate and D-glycero-beta-D-manno-heptose 7-phosphate from sedoheptulose 7-phosphate: step 1/1. In terms of biological role, catalyzes the isomerization of sedoheptulose 7-phosphate in D-glycero-D-manno-heptose 7-phosphate. The sequence is that of Phosphoheptose isomerase from Actinobacillus pleuropneumoniae serotype 5b (strain L20).